Consider the following 212-residue polypeptide: Calaxin (212 aa).

3 consecutive EF-hand domains span residues 65 to 100 (TDDM…FLRG), 101 to 136 (TLEE…SLLK), and 146 to 181 (GIKD…ETLL). Ca(2+) contacts are provided by aspartate 78, aspartate 80, aspartate 82, cysteine 84, glutamate 89, aspartate 114, asparagine 116, aspartate 118, glutamate 125, aspartate 159, aspartate 161, aspartate 163, lysine 165, and aspartate 170.

In terms of assembly, component of the outer dynein arm-docking complex along with ODAD1, ODAD2, ODAD3 and ODAD4. Expressed in trachea multiciliated cells.

It localises to the cytoplasm. Its subcellular location is the cytoskeleton. It is found in the cilium axoneme. The protein resides in the cell projection. The protein localises to the cilium. It localises to the flagellum. Functionally, component of the outer dynein arm-docking complex (ODA-DC) that mediates outer dynein arms (ODA) binding onto the doublet microtubule. Seems to regulate the assembly of both ODAs and their axonemal docking complex onto ciliary microtubules. Regulates ciliary and flagellar motility and is required for cilia-driven determination of body laterality. The sequence is that of Calaxin (CLXN) from Bos taurus (Bovine).